The primary structure comprises 221 residues: Putative gene 53 protein (221 aa).

The polypeptide is Putative gene 53 protein (53) (Bacillus phage SP01 (Bacteriophage SP01)).